The sequence spans 216 residues: uncharacterized protein (216 aa).

The helical transmembrane segment at 5–25 (YVKALVAVTVALGVLLPSTIS) threads the bilayer. Low complexity-rich tracts occupy residues 28 to 67 (KSFS…SSSS) and 89 to 108 (KASS…ATSK). Residues 28 to 115 (KSFSGRSSSS…TSKVTGKTYS (88 aa)) are disordered. 2 consecutive transmembrane segments (helical) span residues 137–157 (GFAP…MFMI) and 183–203 (IAWI…IALI).

It localises to the cell membrane. This is an uncharacterized protein from Bacillus subtilis (strain 168).